The following is a 245-amino-acid chain: 8-amino-3,8-dideoxy-manno-octulosonate cytidylyltransferase (245 aa).

This sequence belongs to the KdsB family.

The protein resides in the cytoplasm. It catalyses the reaction 8-amino-3,8-dideoxy-alpha-D-manno-octulosonate + CTP = CMP-8-amino-3,8-dideoxy-alpha-D-manno-oct-2-ulosonate + diphosphate. It functions in the pathway bacterial outer membrane biogenesis; lipopolysaccharide biosynthesis. Its function is as follows. Activates KDO8N (a required 8-carbon sugar) for incorporation into bacterial lipopolysaccharide in the Shewanella genus. The polypeptide is 8-amino-3,8-dideoxy-manno-octulosonate cytidylyltransferase (Shewanella putrefaciens (strain CN-32 / ATCC BAA-453)).